Reading from the N-terminus, the 894-residue chain is Translation initiation factor IF-2 (894 aa).

Residues 52 to 301 (DRGAAPNKLT…RRPSTLTQGF (250 aa)) are disordered. Over residues 68 to 82 (STLNIPSTGGKSKSV) the composition is skewed to polar residues. Residues 107–154 (EQARREAEELAQHQVQRDAEEKAKRAAEDKAKREAAEQAKRVAAESDK) show a composition bias toward basic and acidic residues. Residues 155–168 (LTNQQTNTMTKSPQ) are compositionally biased toward polar residues. Basic and acidic residues-rich tracts occupy residues 171 to 214 (EKAR…ERGG) and 237 to 254 (HAREAEDENDRKVEGDRR). A compositionally biased stretch (basic residues) spans 255-269 (SRTRGGKATKQKKTS). The span at 270-283 (RLSESKADREEARA) shows a compositional bias: basic and acidic residues. The tr-type G domain occupies 393–562 (SRAPVVTIMG…LLQAEVLELK (170 aa)). The segment at 402–409 (GHVDHGKT) is G1. Residue 402–409 (GHVDHGKT) participates in GTP binding. The tract at residues 427-431 (GITQH) is G2. The G3 stretch occupies residues 448–451 (DTPG). GTP contacts are provided by residues 448-452 (DTPGH) and 502-505 (NKID). The interval 502–505 (NKID) is G4. The tract at residues 538-540 (SAK) is G5.

Belongs to the TRAFAC class translation factor GTPase superfamily. Classic translation factor GTPase family. IF-2 subfamily.

The protein localises to the cytoplasm. In terms of biological role, one of the essential components for the initiation of protein synthesis. Protects formylmethionyl-tRNA from spontaneous hydrolysis and promotes its binding to the 30S ribosomal subunits. Also involved in the hydrolysis of GTP during the formation of the 70S ribosomal complex. This Sodalis glossinidius (strain morsitans) protein is Translation initiation factor IF-2.